Here is a 475-residue protein sequence, read N- to C-terminus: Cytochrome P450 monooxygenase opdE (475 aa).

Residues 10–32 (VQNIPVLLLSCGFLAILFRSLVL) traverse the membrane as a helical segment. A heme-binding site is contributed by Cys-457.

It belongs to the cytochrome P450 family. Requires heme as cofactor.

The protein resides in the membrane. Its pathway is secondary metabolite biosynthesis. Cytochrome P450 monooxygenase; part of the gene cluster that mediates the biosynthesis of oxopyrrolidines, polyketide-amino acid hybrid compounds with feature structures of tetramic acid. Does not seem to play a role in oxopyrrolidines A and B biosynthesis. May be involved in further modifications of these oxopyrrolidines. This is Cytochrome P450 monooxygenase opdE from Penicillium oxalicum (strain 114-2 / CGMCC 5302) (Penicillium decumbens).